The following is a 1086-amino-acid chain: Fused isobutyryl-CoA mutase (1086 aa).

The region spanning 10-140 (HVRFVTASSL…QGMINVMLEE (131 aa)) is the B12-binding domain. Adenosylcob(III)alamin is bound at residue H23. The tract at residues 153–407 (LERLPSGDVQ…FVALVDTINK (255 aa)) is GTPase chaperone MeaI. 210–215 (GAGKSS) provides a ligand contact to GTP. S214, V238, D239, and D252 together coordinate Mg(2+). R255 serves as a coordination point for GTP. Positions 300 and 301 each coordinate Mg(2+). Position 347–350 (347–350 (NKFE)) interacts with GTP. The interval 408-570 (KAGTNWKTSL…YKENVPGSFP (163 aa)) is linker. Substrate is bound by residues F578, R613, R719, Y763, S812, R847, and K852. E964 and N1085 together coordinate GTP.

It belongs to the IcmF family. As to quaternary structure, homodimer. The cofactor is adenosylcob(III)alamin. Mg(2+) serves as cofactor.

It carries out the reaction 2-methylpropanoyl-CoA = butanoyl-CoA. The catalysed reaction is 3-methylbutanoyl-CoA = 2,2-dimethylpropanoyl-CoA. It catalyses the reaction GTP + H2O = GDP + phosphate + H(+). Its function is as follows. Catalyzes the reversible interconversion of isobutyryl-CoA and n-butyryl-CoA, and to a lesser extent, of pivalyl-CoA and isovaleryl-CoA, using radical chemistry. Also exhibits GTPase activity, associated with its G-protein domain (MeaI) that functions as a chaperone that assists cofactor delivery and proper holo-enzyme assembly. Also displays ATPase activity. Is not able to convert 3-hydroxybutyryl-CoA to 2-hydroxyisobutyryl-CoA. Does not exhibit methylmalonyl-CoA mutase (MCM) activity. This Geobacillus kaustophilus (strain HTA426) protein is Fused isobutyryl-CoA mutase.